The primary structure comprises 296 residues: Nucleotide-binding protein str0831 (296 aa).

Residue 13-20 (GMSGAGKT) coordinates ATP. A GTP-binding site is contributed by 63-66 (DMRS).

Belongs to the RapZ-like family.

Its function is as follows. Displays ATPase and GTPase activities. The protein is Nucleotide-binding protein str0831 of Streptococcus thermophilus (strain CNRZ 1066).